A 120-amino-acid polypeptide reads, in one-letter code: Large ribosomal subunit protein uL18 (120 aa).

It belongs to the universal ribosomal protein uL18 family. Part of the 50S ribosomal subunit; part of the 5S rRNA/L5/L18/L25 subcomplex. Contacts the 5S and 23S rRNAs.

This is one of the proteins that bind and probably mediate the attachment of the 5S RNA into the large ribosomal subunit, where it forms part of the central protuberance. The protein is Large ribosomal subunit protein uL18 of Gluconobacter oxydans (strain 621H) (Gluconobacter suboxydans).